Here is a 153-residue protein sequence, read N- to C-terminus: Ribosomal RNA large subunit methyltransferase H (153 aa).

S-adenosyl-L-methionine-binding residues include L71 and G102.

It belongs to the RNA methyltransferase RlmH family. As to quaternary structure, homodimer.

The protein localises to the cytoplasm. The catalysed reaction is pseudouridine(1915) in 23S rRNA + S-adenosyl-L-methionine = N(3)-methylpseudouridine(1915) in 23S rRNA + S-adenosyl-L-homocysteine + H(+). In terms of biological role, specifically methylates the pseudouridine at position 1915 (m3Psi1915) in 23S rRNA. The sequence is that of Ribosomal RNA large subunit methyltransferase H from Anaeromyxobacter dehalogenans (strain 2CP-C).